The chain runs to 199 residues: Recombination protein RecR (199 aa).

The segment at 57 to 72 (CSQCHNITDTDPCQIC) adopts a C4-type zinc-finger fold. Residues 80-176 (TTICVVQESR…KVTRLAHGLP (97 aa)) enclose the Toprim domain.

It belongs to the RecR family.

Its function is as follows. May play a role in DNA repair. It seems to be involved in an RecBC-independent recombinational process of DNA repair. It may act with RecF and RecO. This Shouchella clausii (strain KSM-K16) (Alkalihalobacillus clausii) protein is Recombination protein RecR.